Consider the following 36-residue polypeptide: Dermonecrotic toxin LgSicTox-beta-LOXN2 (36 aa).

This sequence belongs to the arthropod phospholipase D family. Class II subfamily. Requires Mg(2+) as cofactor. In terms of processing, contains 2 disulfide bonds. As to expression, expressed by the venom gland.

The protein resides in the secreted. The enzyme catalyses an N-(acyl)-sphingosylphosphocholine = an N-(acyl)-sphingosyl-1,3-cyclic phosphate + choline. It catalyses the reaction an N-(acyl)-sphingosylphosphoethanolamine = an N-(acyl)-sphingosyl-1,3-cyclic phosphate + ethanolamine. The catalysed reaction is a 1-acyl-sn-glycero-3-phosphocholine = a 1-acyl-sn-glycero-2,3-cyclic phosphate + choline. It carries out the reaction a 1-acyl-sn-glycero-3-phosphoethanolamine = a 1-acyl-sn-glycero-2,3-cyclic phosphate + ethanolamine. Its function is as follows. Dermonecrotic toxins cleave the phosphodiester linkage between the phosphate and headgroup of certain phospholipids (sphingolipid and lysolipid substrates), forming an alcohol (often choline) and a cyclic phosphate. This toxin acts on sphingomyelin (SM). It may also act on ceramide phosphoethanolamine (CPE), lysophosphatidylcholine (LPC) and lysophosphatidylethanolamine (LPE), but not on lysophosphatidylserine (LPS), and lysophosphatidylglycerol (LPG). It acts by transphosphatidylation, releasing exclusively cyclic phosphate products as second products. Induces dermonecrosis, hemolysis, increased vascular permeability, edema, inflammatory response, and platelet aggregation. This chain is Dermonecrotic toxin LgSicTox-beta-LOXN2, found in Loxosceles gaucho (Spider).